Consider the following 316-residue polypeptide: MST50-interacting protein 11 (316 aa).

WD repeat units lie at residues 13 to 53, 61 to 100, 103 to 142, 146 to 187, 190 to 229, 231 to 269, and 281 to 316; these read GHNG…TSYG, GHSH…TTRR, GHTN…KYTI, GHSE…LQTD, GHTG…HLYS, NAND…KVDE, and SREP…MSRA.

It belongs to the WD repeat G protein beta family. Ribosomal protein RACK1 subfamily. As to quaternary structure, interacts with MST50 and MCK1.

Involved in regulating the cell wall integrity and MPS1 activation via its interaction with the MAPKKK MCK1. This Pyricularia oryzae (strain 70-15 / ATCC MYA-4617 / FGSC 8958) (Rice blast fungus) protein is MST50-interacting protein 11.